The chain runs to 529 residues: MASREEEQRETTPERGRGAARRPPTMEDVSSPSPSPPPPRAPPKKRLRRRLESEDEEDSSQDALVPRTPSPRPSTSTADLAIASKKKKKRPSPKPERPPSPEVIVDSEEEREDVALQMVGFSNPPVLIKHGKGGKRTVRRLNEDDPVARGMRTQEEKEESSEAESESTVINPLSLPIVSAWEKGMEAARALMDKYHVDNDLKANFKLLPDQVEALAAVCKTWLNEEHRGLQLTFTSNKTFVTMMGRFLQAYLQSFAEVTYKHHEPTGCALWLHRCAEIEGELKCLHGSIMINKEHVIEMDVTSENGQRALKEQSSKAKIVKNRWGRNVVQISNTDARCCVHDAACPANQFSGKSCGMFFSEGAKAQVAFKQIKAFMQALYPNAQTGHGHLLMPLRCECNSKPGHAPFLGRQLPKLTPFALSNAEDLDADLISDKSVLASVHHPALIVFQCCNPVYRNSRAQGGGPNCDFKISAPDLLNALVMVRSLWSENFTELPRMVVPEFKWSTKHQYRNVSLPVAHSDARQNPFDF.

The span at 1-17 (MASREEEQRETTPERGR) shows a compositional bias: basic and acidic residues. Disordered stretches follow at residues 1-108 (MASR…VDSE) and 125-168 (PVLI…SEST). Basic residues predominate over residues 129–139 (KHGKGGKRTVR). Basic and acidic residues predominate over residues 140–155 (RLNEDDPVARGMRTQE). Positions 156 to 165 (EKEESSEAES) are enriched in acidic residues. Phosphotyrosine; by host is present on Tyr-195. Positions 284 and 286 each coordinate Zn(2+). The segment at 297-331 (IEMDVTSENGQRALKEQSSKAKIVKNRWGRNVVQI) is flexible loop. Positions 339, 355, 396, 398, 450, and 467 each coordinate Zn(2+). The C-terminal arm, DBP binding stretch occupies residues 513 to 529 (VSLPVAHSDARQNPFDF).

Belongs to the adenoviridae E2A DNA-binding protein family. As to quaternary structure, homomultimerizes on viral ssDNA bound to pTP. Forms an initiation complex with viral polymerase, pTP and hosts NFIA and POU2F1/OCT1. Interacts with host SRCAP.

Its subcellular location is the host nucleus. In terms of biological role, plays a role in the elongation phase of viral strand displacement replication by unwinding the template in an ATP-independent fashion, employing its capacity to form multimers. Also enhances the rate of initiation. Released from template upon second strand synthesis. Assembles in complex with viral pTP, viral pol, host NFIA and host POU2F1/OCT1 on viral origin of replication. Covers the whole ssDNA genome during synthesis. The complementary strand synthesis induces its release from DNA template. May inhibit cellular transcription mediated by the interaction between host SRCAP and CBP. The protein is DNA-binding protein of Human adenovirus C serotype 2 (HAdV-2).